Reading from the N-terminus, the 433-residue chain is F-box/kelch-repeat protein At1g24800 (433 aa).

In terms of domain architecture, F-box spans 23–71; it reads TSMCDLPPKLVGEKILTRIPITSLRAVRSTCKLWNALTKDRVLGKAAAQ. Kelch repeat units lie at residues 170–216 and 286–337; these read HKIL…LYGV and VLYH…RFDN.

The protein is F-box/kelch-repeat protein At1g24800 of Arabidopsis thaliana (Mouse-ear cress).